Consider the following 339-residue polypeptide: DNA-directed RNA polymerase subunit alpha (339 aa).

Residues 1 to 235 are alpha N-terminal domain (alpha-NTD); that stretch reads MVLQKNWQSL…DQLQLFINFD (235 aa). An alpha C-terminal domain (alpha-CTD) region spans residues 251–339; the sequence is FNRNLLRKVD…DLAKRLDEPF (89 aa).

This sequence belongs to the RNA polymerase alpha chain family. Homodimer. The RNAP catalytic core consists of 2 alpha, 1 beta, 1 beta' and 1 omega subunit. When a sigma factor is associated with the core the holoenzyme is formed, which can initiate transcription.

It catalyses the reaction RNA(n) + a ribonucleoside 5'-triphosphate = RNA(n+1) + diphosphate. Functionally, DNA-dependent RNA polymerase catalyzes the transcription of DNA into RNA using the four ribonucleoside triphosphates as substrates. The sequence is that of DNA-directed RNA polymerase subunit alpha from Gluconacetobacter diazotrophicus (strain ATCC 49037 / DSM 5601 / CCUG 37298 / CIP 103539 / LMG 7603 / PAl5).